The sequence spans 156 residues: Small ribosomal subunit protein uS7 (156 aa).

This sequence belongs to the universal ribosomal protein uS7 family. In terms of assembly, part of the 30S ribosomal subunit. Contacts proteins S9 and S11.

One of the primary rRNA binding proteins, it binds directly to 16S rRNA where it nucleates assembly of the head domain of the 30S subunit. Is located at the subunit interface close to the decoding center, probably blocks exit of the E-site tRNA. The polypeptide is Small ribosomal subunit protein uS7 (Methylorubrum extorquens (strain CM4 / NCIMB 13688) (Methylobacterium extorquens)).